The sequence spans 245 residues: 1-(5-phosphoribosyl)-5-[(5-phosphoribosylamino)methylideneamino] imidazole-4-carboxamide isomerase (245 aa).

The active-site Proton acceptor is the aspartate 8. Residue aspartate 130 is the Proton donor of the active site.

It belongs to the HisA/HisF family.

The protein resides in the cytoplasm. The enzyme catalyses 1-(5-phospho-beta-D-ribosyl)-5-[(5-phospho-beta-D-ribosylamino)methylideneamino]imidazole-4-carboxamide = 5-[(5-phospho-1-deoxy-D-ribulos-1-ylimino)methylamino]-1-(5-phospho-beta-D-ribosyl)imidazole-4-carboxamide. The protein operates within amino-acid biosynthesis; L-histidine biosynthesis; L-histidine from 5-phospho-alpha-D-ribose 1-diphosphate: step 4/9. This Pseudomonas putida (strain ATCC 47054 / DSM 6125 / CFBP 8728 / NCIMB 11950 / KT2440) protein is 1-(5-phosphoribosyl)-5-[(5-phosphoribosylamino)methylideneamino] imidazole-4-carboxamide isomerase.